The following is a 1939-amino-acid chain: Myosin-4 (1939 aa).

Positions 33 to 82 (DAKSSVFVVDAKESYVKATVQSREGGKVTAKTEGGATVTVKDDQVFSMNP) constitute a Myosin N-terminal SH3-like domain. S36 carries the phosphoserine modification. Phosphothreonine occurs at positions 64 and 69. S79 is modified (phosphoserine). The Myosin motor domain occupies 86 to 782 (DKIEDMAMMT…LLGTLEEMRD (697 aa)). K130 is subject to N6,N6,N6-trimethyllysine. Position 179 to 186 (179 to 186 (GESGAGKT)) interacts with ATP. Residue Y389 is modified to Phosphotyrosine. Position 391 is a phosphothreonine (T391). At S392 the chain carries Phosphoserine. The residue at position 419 (T419) is a Phosphothreonine. Position 424 is a phosphotyrosine (Y424). Position 625 is a phosphoserine (S625). The interval 659-681 (LNKLMTNLKSTHPHFVRCLIPNE) is actin-binding. The residue at position 757 (H757) is a Pros-methylhistidine. Residues 761-775 (KFGHTKVFFKAGLLG) are actin-binding. Position 776 is a phosphothreonine (T776). Residues 785–814 (LAQLITRTQAVCRGYLMRVEFKKMMERRES) form the IQ domain. A coiled-coil region spans residues 843–1939 (LLKSAETEKE…EVHTKVISEE (1097 aa)). Phosphoserine is present on residues S1092 and S1096. Disordered stretches follow at residues 1128–1147 (AERA…SREL) and 1153–1172 (RLEE…KKRE). Phosphoserine is present on residues S1162 and S1237. The residue at position 1241 (T1241) is a Phosphothreonine. S1243 bears the Phosphoserine mark. Residue T1255 is modified to Phosphothreonine. S1261 is subject to Phosphoserine. At T1265 the chain carries Phosphothreonine. The disordered stretch occupies residues 1276 to 1299 (ELSTQKARLHTESGEFSRQLDEKD). S1278 is subject to Phosphoserine. The segment covering 1284–1299 (LHTESGEFSRQLDEKD) has biased composition (basic and acidic residues). T1286 is modified (phosphothreonine). 5 positions are modified to phosphoserine: S1288, S1292, S1303, S1306, and S1413. The residue at position 1464 (Y1464) is a Phosphotyrosine. A Phosphothreonine modification is found at T1467. S1474 carries the phosphoserine modification. Y1492 carries the post-translational modification Phosphotyrosine. A Phosphoserine modification is found at S1495. T1501 bears the Phosphothreonine mark. At S1514 the chain carries Phosphoserine. The residue at position 1517 (T1517) is a Phosphothreonine. Phosphoserine occurs at positions 1542, 1547, 1554, 1574, 1600, 1603, 1714, and 1726. 2 positions are modified to phosphothreonine: T1730 and T1736. S1739 is subject to Phosphoserine.

The protein belongs to the TRAFAC class myosin-kinesin ATPase superfamily. Myosin family. As to quaternary structure, muscle myosin is a hexameric protein that consists of 2 heavy chain subunits (MHC), 2 alkali light chain subunits (MLC) and 2 regulatory light chain subunits (MLC-2). Expressed in type 2b myofibers in the tibialis anterior muscle (at protein level).

The protein localises to the cytoplasm. The protein resides in the myofibril. Its function is as follows. Muscle contraction. The polypeptide is Myosin-4 (Myh4) (Mus musculus (Mouse)).